We begin with the raw amino-acid sequence, 238 residues long: Heme oxygenase 1 (238 aa).

This sequence belongs to the heme oxygenase family.

It catalyses the reaction heme b + 3 reduced [NADPH--hemoprotein reductase] + 3 O2 = biliverdin IXalpha + CO + Fe(2+) + 3 oxidized [NADPH--hemoprotein reductase] + 3 H2O + H(+). In terms of biological role, catalyzes the opening of the heme ring with the release of iron. Key enzyme in the synthesis of the chromophoric part of the photosynthetic antennae. Upon overexpression in E.coli with PCB:ferredoxin oxidoreductase, CpeS and either CpcB or PecB permits synthesis of phycocyanin-coupled CpcB or PecB. The sequence is that of Heme oxygenase 1 (pbsA1) from Nostoc sp. (strain PCC 7120 / SAG 25.82 / UTEX 2576).